Here is a 134-residue protein sequence, read N- to C-terminus: Large ribosomal subunit protein uL16c (134 aa).

Belongs to the universal ribosomal protein uL16 family. In terms of assembly, part of the 50S ribosomal subunit.

Its subcellular location is the plastid. The protein resides in the chloroplast. This Nephroselmis olivacea (Green alga) protein is Large ribosomal subunit protein uL16c.